A 519-amino-acid chain; its full sequence is AAA-ATPase At4g30250 (519 aa).

The first 24 residues, 1-24, serve as a signal peptide directing secretion; the sequence is MSDYWTTMASLLGMLAFCQTIVQL. 252-259 contributes to the ATP binding site; sequence GPPGTGKS. 2 disordered regions span residues 315–335 and 467–519; these read GKNKKKNGSYEYDPGLTNGSG and KSVG…EKEK. Acidic residues predominate over residues 479–488; it reads QEEEEEAEEE. The span at 489-508 shows a compositional bias: basic and acidic residues; that stretch reads QEKRALDSPNRRNREVCGFR. Over residues 509-519 the composition is skewed to acidic residues; the sequence is EEEEEEDEKEK.

This sequence belongs to the AAA ATPase family. BCS1 subfamily. Requires Mg(2+) as cofactor.

The enzyme catalyses ATP + H2O = ADP + phosphate + H(+). The chain is AAA-ATPase At4g30250 from Arabidopsis thaliana (Mouse-ear cress).